The following is a 348-amino-acid chain: Mannonate dehydratase (348 aa).

It belongs to the mannonate dehydratase family. The cofactor is Fe(2+). Mn(2+) serves as cofactor.

The catalysed reaction is D-mannonate = 2-dehydro-3-deoxy-D-gluconate + H2O. The protein operates within carbohydrate metabolism; pentose and glucuronate interconversion. Its function is as follows. Catalyzes the dehydration of D-mannonate. The polypeptide is Mannonate dehydratase (Streptococcus uberis (strain ATCC BAA-854 / 0140J)).